We begin with the raw amino-acid sequence, 359 residues long: Phospho-N-acetylmuramoyl-pentapeptide-transferase (359 aa).

10 helical membrane passes run 27–47 (IYAL…MMRW), 73–93 (TMGG…WADL), 94–114 (TNIY…VGFV), 134–154 (LLGQ…QPAY), 166–186 (FTPD…IGAS), 197–217 (GLAI…IYIA), 233–253 (GVGE…GFLW), 261–281 (LFMG…IAVL), 286–306 (LLLI…IMQV), and 336–356 (KIVI…LSTL).

This sequence belongs to the glycosyltransferase 4 family. MraY subfamily. It depends on Mg(2+) as a cofactor.

It localises to the cell inner membrane. The catalysed reaction is UDP-N-acetyl-alpha-D-muramoyl-L-alanyl-gamma-D-glutamyl-meso-2,6-diaminopimeloyl-D-alanyl-D-alanine + di-trans,octa-cis-undecaprenyl phosphate = di-trans,octa-cis-undecaprenyl diphospho-N-acetyl-alpha-D-muramoyl-L-alanyl-D-glutamyl-meso-2,6-diaminopimeloyl-D-alanyl-D-alanine + UMP. Its pathway is cell wall biogenesis; peptidoglycan biosynthesis. Catalyzes the initial step of the lipid cycle reactions in the biosynthesis of the cell wall peptidoglycan: transfers peptidoglycan precursor phospho-MurNAc-pentapeptide from UDP-MurNAc-pentapeptide onto the lipid carrier undecaprenyl phosphate, yielding undecaprenyl-pyrophosphoryl-MurNAc-pentapeptide, known as lipid I. In Maridesulfovibrio salexigens (strain ATCC 14822 / DSM 2638 / NCIMB 8403 / VKM B-1763) (Desulfovibrio salexigens), this protein is Phospho-N-acetylmuramoyl-pentapeptide-transferase.